Here is a 134-residue protein sequence, read N- to C-terminus: Aspartate 1-decarboxylase (134 aa).

The active-site Schiff-base intermediate with substrate; via pyruvic acid is the Ser25. Position 25 is a pyruvic acid (Ser) (Ser25). Residue Thr57 coordinates substrate. Tyr58 serves as the catalytic Proton donor. 73–75 (GAA) contacts substrate.

The protein belongs to the PanD family. As to quaternary structure, heterooctamer of four alpha and four beta subunits. Pyruvate serves as cofactor. Post-translationally, is synthesized initially as an inactive proenzyme, which is activated by self-cleavage at a specific serine bond to produce a beta-subunit with a hydroxyl group at its C-terminus and an alpha-subunit with a pyruvoyl group at its N-terminus.

The protein localises to the cytoplasm. It carries out the reaction L-aspartate + H(+) = beta-alanine + CO2. Its pathway is cofactor biosynthesis; (R)-pantothenate biosynthesis; beta-alanine from L-aspartate: step 1/1. Its function is as follows. Catalyzes the pyruvoyl-dependent decarboxylation of aspartate to produce beta-alanine. This chain is Aspartate 1-decarboxylase, found in Mycolicibacterium gilvum (strain PYR-GCK) (Mycobacterium gilvum (strain PYR-GCK)).